The primary structure comprises 397 residues: Ubiquitin-like modifier-activating enzyme 5 (397 aa).

The ATP site is built by Gly-76, Asp-97, Lys-120, Asn-143, and Asn-177. Zn(2+) contacts are provided by Cys-219 and Cys-222. The Glycyl thioester intermediate role is filled by Cys-243. Zn(2+)-binding residues include Cys-296 and Cys-301. The tract at residues 362–384 (LAYEPPASTKHSETTSTTAVSDD) is disordered. Residues 375–384 (TTSTTAVSDD) show a composition bias toward low complexity.

It belongs to the ubiquitin-activating E1 family. UBA5 subfamily.

E1-like enzyme which activates UFM1. The sequence is that of Ubiquitin-like modifier-activating enzyme 5 from Aedes aegypti (Yellowfever mosquito).